The primary structure comprises 183 residues: uncharacterized protein (183 aa).

The Macro domain occupies 1 to 182 (MIKVVKGDIT…KALKIVGQGG (182 aa)).

This is an uncharacterized protein from Pyrococcus furiosus (strain ATCC 43587 / DSM 3638 / JCM 8422 / Vc1).